Consider the following 455-residue polypeptide: Serine--tRNA ligase (455 aa).

Position 252 to 254 (252 to 254) interacts with L-serine; that stretch reads TAE. ATP-binding positions include 283 to 285 and valine 299; that span reads RKE. Glutamate 306 provides a ligand contact to L-serine. 370–373 provides a ligand contact to ATP; sequence EVVS. Threonine 406 provides a ligand contact to L-serine.

The protein belongs to the class-II aminoacyl-tRNA synthetase family. Type-1 seryl-tRNA synthetase subfamily. In terms of assembly, homodimer. The tRNA molecule binds across the dimer.

The protein resides in the cytoplasm. It carries out the reaction tRNA(Ser) + L-serine + ATP = L-seryl-tRNA(Ser) + AMP + diphosphate + H(+). It catalyses the reaction tRNA(Sec) + L-serine + ATP = L-seryl-tRNA(Sec) + AMP + diphosphate + H(+). It participates in aminoacyl-tRNA biosynthesis; selenocysteinyl-tRNA(Sec) biosynthesis; L-seryl-tRNA(Sec) from L-serine and tRNA(Sec): step 1/1. Functionally, catalyzes the attachment of serine to tRNA(Ser). Is also able to aminoacylate tRNA(Sec) with serine, to form the misacylated tRNA L-seryl-tRNA(Sec), which will be further converted into selenocysteinyl-tRNA(Sec). In Thermococcus kodakarensis (strain ATCC BAA-918 / JCM 12380 / KOD1) (Pyrococcus kodakaraensis (strain KOD1)), this protein is Serine--tRNA ligase.